The primary structure comprises 119 residues: Large ribosomal subunit protein bL20 (119 aa).

Belongs to the bacterial ribosomal protein bL20 family.

Binds directly to 23S ribosomal RNA and is necessary for the in vitro assembly process of the 50S ribosomal subunit. It is not involved in the protein synthesizing functions of that subunit. The sequence is that of Large ribosomal subunit protein bL20 from Methylocella silvestris (strain DSM 15510 / CIP 108128 / LMG 27833 / NCIMB 13906 / BL2).